The following is a 1372-amino-acid chain: DNA-directed RNA polymerase subunit beta' (1372 aa).

Zn(2+) contacts are provided by Cys69, Cys71, Cys84, and Cys87. Mg(2+) is bound by residues Asp460, Asp462, and Asp464. Zn(2+) contacts are provided by Cys808, Cys882, Cys889, and Cys892.

It belongs to the RNA polymerase beta' chain family. As to quaternary structure, the RNAP catalytic core consists of 2 alpha, 1 beta, 1 beta' and 1 omega subunit. When a sigma factor is associated with the core the holoenzyme is formed, which can initiate transcription. The cofactor is Mg(2+). Zn(2+) is required as a cofactor.

It catalyses the reaction RNA(n) + a ribonucleoside 5'-triphosphate = RNA(n+1) + diphosphate. DNA-dependent RNA polymerase catalyzes the transcription of DNA into RNA using the four ribonucleoside triphosphates as substrates. This is DNA-directed RNA polymerase subunit beta' from Rickettsia typhi (strain ATCC VR-144 / Wilmington).